The sequence spans 502 residues: Cytochrome P450 71B10 (502 aa).

A helical membrane pass occupies residues 1 to 21 (MTVLWFVSLILLISILLVAVK). Residue Cys443 coordinates heme.

This sequence belongs to the cytochrome P450 family. Requires heme as cofactor.

The protein resides in the membrane. This chain is Cytochrome P450 71B10 (CYP71B10), found in Arabidopsis thaliana (Mouse-ear cress).